Here is a 147-residue protein sequence, read N- to C-terminus: Ribosome-binding factor A (147 aa).

The segment at 122 to 147 (QQQFGSVDDDVIENDIEESDDTEGKV) is disordered. Residues 128–147 (VDDDVIENDIEESDDTEGKV) show a composition bias toward acidic residues.

The protein belongs to the RbfA family. In terms of assembly, monomer. Binds 30S ribosomal subunits, but not 50S ribosomal subunits or 70S ribosomes.

It is found in the cytoplasm. In terms of biological role, one of several proteins that assist in the late maturation steps of the functional core of the 30S ribosomal subunit. Associates with free 30S ribosomal subunits (but not with 30S subunits that are part of 70S ribosomes or polysomes). Required for efficient processing of 16S rRNA. May interact with the 5'-terminal helix region of 16S rRNA. The sequence is that of Ribosome-binding factor A from Shewanella oneidensis (strain ATCC 700550 / JCM 31522 / CIP 106686 / LMG 19005 / NCIMB 14063 / MR-1).